We begin with the raw amino-acid sequence, 906 residues long: Cadherin-2 (906 aa).

The signal sequence occupies residues 1–25 (MCRIAGAPRTLLPLLAALLQASVEA). Residues 26–159 (SGEIALCKTG…HNGYLQRQKR (134 aa)) constitute a propeptide that is removed on maturation. Residues S96 and S135 each carry the phosphoserine modification. 5 Cadherin domains span residues 160 to 267 (DWVI…RPEF), 268 to 382 (LHQV…PPEF), 383 to 497 (TAMT…NPYF), 498 to 603 (APNP…DNAP), and 604 to 714 (QVLP…DVDR). The Extracellular segment spans residues 160 to 724 (DWVIPPINLP…IVGAGLGTGA (565 aa)). Residue E170 coordinates Ca(2+). N-linked (GlcNAc...) asparagine glycosylation occurs at N190. Residues D226, E228, D259, M260, N261, D262, and N263 each contribute to the Ca(2+) site. An N-linked (GlcNAc...) asparagine glycan is attached at N273. D293, D295, and N301 together coordinate Ca(2+). Residue N325 is glycosylated (N-linked (GlcNAc...) asparagine). Residue D353 participates in Ca(2+) binding. 5 N-linked (GlcNAc...) asparagine glycosylation sites follow: N402, N572, N622, N651, and N692. A helical membrane pass occupies residues 725 to 745 (IIAILLCIIILLILVLMFVVW). At 746–906 (MKRRDKERQA…LAEMYGGGDD (161 aa)) the chain is on the cytoplasmic side. A compositionally biased stretch (low complexity) spans 863–880 (SGSTAGSLSSLNSSSSGG). A disordered region spans residues 863–884 (SGSTAGSLSSLNSSSSGGEQDY).

As to quaternary structure, homodimer (via extracellular region). Can also form heterodimers with other cadherins (via extracellular region). Dimerization occurs in trans, i.e. with a cadherin chain from another cell. Interacts with CDCP1. Interacts with PCDH8; this complex may also include TAOK2. The interaction with PCDH8 may lead to internalization through TAOK2/p38 MAPK pathway. Identified in a complex containing FGFR4, NCAM1, CDH2, PLCG1, FRS2, SRC, SHC1, GAP43 and CTTN. May interact with OBSCN (via protein kinase domain 2). Interacts with FBXO45. Post-translationally, cleaved by MMP24. Ectodomain cleavage leads to the generation of a soluble 90 kDa N-terminal soluble fragment and a 45 kDa membrane-bound C-terminal fragment 1 (CTF1), which is further cleaved by gamma-secretase into a 35 kDa. Cleavage in neural stem cells by MMP24 affects CDH2-mediated anchorage of neural stem cells to ependymocytes in the adult subependymal zone, leading to modulate neural stem cell quiescence. May be phosphorylated by OBSCN.

The protein resides in the cell membrane. Its subcellular location is the sarcolemma. It is found in the cell junction. It localises to the cell surface. The protein localises to the desmosome. The protein resides in the adherens junction. Calcium-dependent cell adhesion protein; preferentially mediates homotypic cell-cell adhesion by dimerization with a CDH2 chain from another cell. Cadherins may thus contribute to the sorting of heterogeneous cell types. Acts as a regulator of neural stem cells quiescence by mediating anchorage of neural stem cells to ependymocytes in the adult subependymal zone: upon cleavage by MMP24, CDH2-mediated anchorage is affected, leading to modulate neural stem cell quiescence. Plays a role in cell-to-cell junction formation between pancreatic beta cells and neural crest stem (NCS) cells, promoting the formation of processes by NCS cells. Required for proper neurite branching. Required for pre- and postsynaptic organization. CDH2 may be involved in neuronal recognition mechanism. In hippocampal neurons, may regulate dendritic spine density. This Otolemur garnettii (Small-eared galago) protein is Cadherin-2 (CDH2).